The sequence spans 407 residues: D-mannose isomerase (407 aa).

Catalysis depends on proton donor/acceptor residues histidine 251 and histidine 383.

This sequence belongs to the N-acylglucosamine 2-epimerase family. Homodimer.

The enzyme catalyses D-mannose = D-fructose. It carries out the reaction D-lyxose = D-xylulose. Its activity is regulated as follows. Significantly inhibited by divalent metal ions such as Cu(2+), Cd(2+) or Ca(2+). Catalyzes the reversible isomerization of D-mannose to D-fructose. Shows weaker activity on D-lyxose, but cannot use N-acetyl D-glucosamine. This chain is D-mannose isomerase, found in Thermobifida fusca (Thermomonospora fusca).